The primary structure comprises 97 residues: Protein 9b (97 aa).

Residues 8-97 (VPPALHLVDP…PDEFVVVTAK (90 aa)) form the 9b domain.

In terms of assembly, homodimer.

It is found in the host cytoplasmic vesicle membrane. The protein localises to the host cytoplasm. This Bat coronavirus 279/2005 (BtCoV) protein is Protein 9b.